Here is a 324-residue protein sequence, read N- to C-terminus: Germination protease (324 aa).

Residues M1 to D10 constitute a propeptide that is removed on maturation.

Belongs to the peptidase A25 family. As to quaternary structure, homotetramer. Autoproteolytically processed. The inactive tetrameric zymogen termed p46 autoprocesses to a smaller form termed p41, which is active only during spore germination.

It catalyses the reaction Endopeptidase action with P4 Glu or Asp, P1 preferably Glu &gt; Asp, P1' hydrophobic and P2' Ala.. Functionally, initiates the rapid degradation of small, acid-soluble proteins during spore germination. In Caldanaerobacter subterraneus subsp. tengcongensis (strain DSM 15242 / JCM 11007 / NBRC 100824 / MB4) (Thermoanaerobacter tengcongensis), this protein is Germination protease.